Consider the following 397-residue polypeptide: Enoyl-[acyl-carrier-protein] reductase [NADH] (397 aa).

Residues 48–53 (GASTGY), 74–75 (FE), 111–112 (DA), and 139–140 (VA) contribute to the NAD(+) site. A substrate-binding site is contributed by Y225. Residue Y235 is the Proton donor of the active site. Residues K244 and 273 to 275 (VVT) each bind NAD(+).

Belongs to the TER reductase family. In terms of assembly, monomer.

It carries out the reaction a 2,3-saturated acyl-[ACP] + NAD(+) = a (2E)-enoyl-[ACP] + NADH + H(+). It participates in lipid metabolism; fatty acid biosynthesis. Functionally, involved in the final reduction of the elongation cycle of fatty acid synthesis (FAS II). Catalyzes the reduction of a carbon-carbon double bond in an enoyl moiety that is covalently linked to an acyl carrier protein (ACP). The polypeptide is Enoyl-[acyl-carrier-protein] reductase [NADH] (Burkholderia pseudomallei (strain 1106a)).